The primary structure comprises 138 residues: MPPRSPLLALVFLAAGVLSSATSPPPPPCSRSCAALNCDSVGIRYGKYCGVGWSGCDGEEPCDDLDACCRDHDHCVDKKGLMSVKCHEKFKNCMRKVKKAGKIGFSRKCPYEMAMATMTSGMDMAIMLSQLGTQKLEL.

The first 21 residues, 1–21 (MPPRSPLLALVFLAAGVLSSA), serve as a signal peptide directing secretion. 6 cysteine pairs are disulfide-bonded: Cys29–Cys56, Cys33–Cys62, Cys38–Cys109, Cys49–Cys69, Cys68–Cys93, and Cys75–Cys86. Tyr48, Gly50, and Trp53 together coordinate Ca(2+). Residue His72 is part of the active site. Asp73 contributes to the Ca(2+) binding site.

It belongs to the phospholipase A2 family. It depends on Ca(2+) as a cofactor.

The protein resides in the secreted. It catalyses the reaction a 1,2-diacyl-sn-glycero-3-phosphocholine + H2O = a 1-acyl-sn-glycero-3-phosphocholine + a fatty acid + H(+). Its function is as follows. PA2 catalyzes the calcium-dependent hydrolysis of the 2-acyl groups in 3-sn-phosphoglycerides. Releases lysophospholipids (LPLs) and free fatty acids (FFAs) from membrane phospholipids in response to hormones and other external stimuli. This Oryza sativa subsp. japonica (Rice) protein is Probable phospholipase A2 homolog 1 (PLA2-I).